A 192-amino-acid chain; its full sequence is Transmembrane protein 276 (192 aa).

The N-terminal stretch at 1–32 is a signal peptide; the sequence is MVSKPRNEWSTALSHLVLAGVSLHAAVSSVQS. 4 consecutive transmembrane segments (helical) span residues 35 to 55, 63 to 83, 92 to 112, and 114 to 134; these read GAAA…APEL, AGAW…FHWV, LLLG…PEGC, and VAGQ…AVFT.

It localises to the membrane. The polypeptide is Transmembrane protein 276 (Rattus norvegicus (Rat)).